A 123-amino-acid chain; its full sequence is Glutaredoxin-like protein (123 aa).

The 97-residue stretch at 27-123 (INEVEESITN…GTLFNDLKKK (97 aa)) folds into the Glutaredoxin domain.

It belongs to the glutaredoxin family.

This chain is Glutaredoxin-like protein (grxB), found in Dictyostelium discoideum (Social amoeba).